We begin with the raw amino-acid sequence, 2310 residues long: Transcription initiation factor TFIID subunit 1 (2310 aa).

Residues 80–150 are a coiled coil; sequence DYEDIDEVAE…ERRKQRKQVG (71 aa). Disordered regions lie at residues 115-284, 330-352, 395-421, 521-587, 602-686, 755-778, 802-862, 937-968, 1417-1494, 1558-1616, and 1648-2111; these read QQQH…TMKA, KFPD…QTLN, NAGI…TPTL, PNLN…NSSK, DTDS…KQNN, KEHN…KSKK, AANG…NGST, GHNM…HKSD, LFGD…AKAK, QKKK…SSIG, and NNNF…KDGS. The span at 117 to 129 shows a compositional bias: basic and acidic residues; the sequence is QHKEREEQQRLKL. The segment covering 140-149 has biased composition (basic residues); sequence KERRKQRKQV. Residues 164–174 are compositionally biased toward acidic residues; it reads DDFDFDEEEEQ. Residues 191-248 are compositionally biased toward low complexity; sequence SSASSLSSSSASSSASSSRSPSMSRSASDIESDSMSDSSRSSGSSISSRSSISSSSSR. Over residues 254–265 the composition is skewed to gly residues; that stretch reads DGGGGGGGGGGG. A compositionally biased stretch (basic residues) spans 266–281; the sequence is SHRRRHKEKKPKKKVT. Composition is skewed to low complexity over residues 411–421 and 524–587; these read LTSSNTTTPTL and NKNS…NSSK. Polar residues predominate over residues 603-614; it reads TDSQNLLQQPLS. The span at 615 to 630 shows a compositional bias: basic and acidic residues; sequence QEKDKEKEKDKDKAQN. Residues 639–685 show a composition bias toward low complexity; that stretch reads NNKKNSTTNNNNLTNNNGNNNNTNNNNNNSNNNSNNNNNNNNNNKQN. The stretch at 809-846 forms a coiled coil; the sequence is SFEEQLQKDKEEDERKEREEREQSQREIDKFNLSNDKF. Residues 813–838 are compositionally biased toward basic and acidic residues; that stretch reads QLQKDKEEDERKEREEREQSQREIDK. 2 stretches are compositionally biased toward low complexity: residues 950 to 961 and 1421 to 1449; these read SSSSSSSSSSSK and SNQS…SSKS. Coiled coils occupy residues 1422–1522 and 1574–1604; these read NQSQ…DLTQ and KQNE…QRED. Residues 1462–1473 are compositionally biased toward acidic residues; the sequence is ESDEEEDNEEEE. 3 stretches are compositionally biased toward basic and acidic residues: residues 1481–1494, 1563–1576, and 1588–1605; these read KNKD…AKAK, DQFL…GKQN, and RIQE…REDS. Over residues 1606–1616 the composition is skewed to polar residues; it reads FNMNSSNSSIG. Low complexity-rich tracts occupy residues 1648–1659, 1667–1682, and 1700–1730; these read NNNFSLNTSSSN, SSSS…NNSN, and NSDS…SGHP. Composition is skewed to basic and acidic residues over residues 1731-1773 and 1780-1874; these read RSSD…GEHS and EHRS…ERSR. Low complexity-rich tracts occupy residues 1895–2023 and 2038–2053; these read STGS…NSTN and NGSN…GGNN. Residues 1946–2004 are a coiled coil; that stretch reads NNNNNNNNNNINNNNNNNNNINNINNNNNNNINNINNNYNNNNNNNNNNNNNNNNNNNN. Polar residues predominate over residues 2058 to 2072; that stretch reads QSVLNTPLSASSSGS. Low complexity predominate over residues 2082-2091; the sequence is SNSESPSLSS. Basic and acidic residues predominate over residues 2096-2111; sequence GSDKSSRRNRVRKDGS. Residues 2123-2217 enclose the Bromo domain; sequence RILDKLRTND…TSTLQLLAPF (95 aa). Positions 2244–2289 are disordered; it reads VDHTNGSTPSTPITLNTPITPNLPSNSPFFPPVDPPSKAHHSAEDE. The segment covering 2250–2271 has biased composition (low complexity); the sequence is STPSTPITLNTPITPNLPSNSP.

Belongs to the TAF1 family.

It localises to the nucleus. May be a component of the TFIID basal transcription factor complex. The sequence is that of Transcription initiation factor TFIID subunit 1 (taf1) from Dictyostelium discoideum (Social amoeba).